The sequence spans 226 residues: Orotidine 5'-phosphate decarboxylase (226 aa).

Substrate contacts are provided by residues Asp9, Lys31, 58–67, Thr115, Arg176, Gln184, Gly204, and Arg205; that span reads DLKLYDIPNT. The Proton donor role is filled by Lys60.

This sequence belongs to the OMP decarboxylase family. Type 1 subfamily. In terms of assembly, homodimer.

The enzyme catalyses orotidine 5'-phosphate + H(+) = UMP + CO2. The protein operates within pyrimidine metabolism; UMP biosynthesis via de novo pathway; UMP from orotate: step 2/2. In terms of biological role, catalyzes the decarboxylation of orotidine 5'-monophosphate (OMP) to uridine 5'-monophosphate (UMP). The chain is Orotidine 5'-phosphate decarboxylase from Wolbachia pipientis subsp. Culex pipiens (strain wPip).